Here is a 452-residue protein sequence, read N- to C-terminus: Flavanone 7-O-glucoside 2''-O-beta-L-rhamnosyltransferase (452 aa).

Catalysis depends on His21, which acts as the Proton acceptor. His21 contributes to the an anthocyanidin binding site. The active-site Charge relay is Asp121. The helical transmembrane segment at 136–156 threads the bilayer; sequence IAAILFLPLSAVACSFLLHNI. 6 residues coordinate UDP-beta-L-rhamnose: Ser268, Val330, His347, Gly351, Ser352, and Glu355. Residues 407–436 are a coiled coil; that stretch reads KHVVLQEEAKQIRRKANEISESMKKIGDAE.

The protein belongs to the UDP-glycosyltransferase family. As to quaternary structure, monomer. In terms of tissue distribution, expressed in young fruits and leaves.

The protein resides in the membrane. It carries out the reaction flavanone 7-O-beta-D-glucoside + UDP-beta-L-rhamnose = flavanone 7-O-[alpha-L-rhamnosyl-(1-&gt;2)-beta-D-glucoside] + UDP + H(+). In terms of biological role, involved in the production of the bitter neohesperidosides in citrus. Shows a strict specificity for UDP-rhamnose as donor. This Citrus maxima (Pomelo) protein is Flavanone 7-O-glucoside 2''-O-beta-L-rhamnosyltransferase (C12RT1).